We begin with the raw amino-acid sequence, 446 residues long: ATP synthase subunit b-delta (446 aa).

The segment at 1 to 168 (MSTFIGQLFG…PATADVDYPL (168 aa)) is ATP synthase subunit b. A helical membrane pass occupies residues 4-24 (FIGQLFGFAVIVYLVWRFIVP). Residues 169–446 (LAKMRSASRR…LAAAEARLPD (278 aa)) are ATP synthase subunit delta.

This sequence in the N-terminal section; belongs to the ATPase B chain family. It in the C-terminal section; belongs to the ATPase delta chain family. As to quaternary structure, F-type ATPases have 2 components, F(1) - the catalytic core - and F(0) - the membrane proton channel. F(1) has five subunits: alpha(3), beta(3), gamma(1), delta(1), epsilon(1). F(0) has three main subunits: a(1), b(2) and c(10-14). The alpha and beta chains form an alternating ring which encloses part of the gamma chain. F(1) is attached to F(0) by a central stalk formed by the gamma and epsilon chains, while a peripheral stalk is formed by the delta and b chains.

It is found in the cell membrane. F(1)F(0) ATP synthase produces ATP from ADP in the presence of a proton or sodium gradient. F-type ATPases consist of two structural domains, F(1) containing the extramembraneous catalytic core and F(0) containing the membrane proton channel, linked together by a central stalk and a peripheral stalk. During catalysis, ATP synthesis in the catalytic domain of F(1) is coupled via a rotary mechanism of the central stalk subunits to proton translocation. Functionally, this fusion protein includes a component of the F(0) channel (subunit b) and of the F(1) subunit (subunit delta). Two copies of subunit b and one of delta together form the peripheral 'stator' stalk which links F(1) to F(0). The sequence is that of ATP synthase subunit b-delta (atpFH) from Mycobacterium tuberculosis (strain CDC 1551 / Oshkosh).